The sequence spans 496 residues: Cytochrome P450 71D180 (496 aa).

The helical; Signal-anchor for type II membrane protein transmembrane segment at 1-21 threads the bilayer; that stretch reads MDISISWVVIIVFVLSYLILM. Cys-435 contributes to the heme binding site. Residues 471-496 are disordered; it reads MSETPGLSGPRKNPLIMIPTIHNPTS.

The protein belongs to the cytochrome P450 family. Heme serves as cofactor.

The protein resides in the membrane. The enzyme catalyses gamma-terpinene + 2 reduced [NADPH--hemoprotein reductase] + 2 O2 = carvacrol + 2 oxidized [NADPH--hemoprotein reductase] + 3 H2O + 2 H(+). The catalysed reaction is (4S)-limonene + reduced [NADPH--hemoprotein reductase] + O2 = (1S,5R)-carveol + oxidized [NADPH--hemoprotein reductase] + H2O + H(+). It carries out the reaction (4R)-limonene + reduced [NADPH--hemoprotein reductase] + O2 = (1R,5S)-carveol + oxidized [NADPH--hemoprotein reductase] + H2O + H(+). Its pathway is secondary metabolite biosynthesis; terpenoid biosynthesis. Involved in the biosynthesis of phenolic monoterpenes natural products thymol and carvacrol which have a broad range of biological activities acting as antimicrobial compounds, insecticides, antioxidants and pharmaceutical agents. Catalyzes the C2-hydroxylation of gamma-terpinene to produce carvacrol. Mediates also the C6-hydroxylation of (4S)-limonene and (4R)-limonene to form carveol. This chain is Cytochrome P450 71D180, found in Origanum majorana (Sweet marjoram).